A 230-amino-acid polypeptide reads, in one-letter code: C-reactive protein (230 aa).

An N-terminal signal peptide occupies residues 1-19; the sequence is MEKLLWCLLITISFSQAFG. A Pentraxin (PTX) domain is found at 24 to 223; it reads SKQAFVFPGV…DVFIKPQLWP (200 aa). A disulfide bond links cysteine 55 and cysteine 114. Asparagine 78 is a binding site for Ca(2+). N-linked (GlcNAc...) asparagine glycosylation is present at asparagine 147. The Ca(2+) site is built by glutamate 155, glutamine 156, aspartate 157, and glutamine 167. Cysteine 227 and cysteine 228 form a disulfide bridge.

Belongs to the pentraxin family. In terms of assembly, homopentamer; disulfide-linked. Pentraxin (or pentaxin) have a discoid arrangement of 5 non-covalently bound subunits. Two of the five chains form a dimer linked by two interchain disulfide bonds located in the C-terminal heptapeptide and specific to rat CRP. Interacts with FCN1; may regulate monocyte activation by FCN1. It depends on Ca(2+) as a cofactor. The last two cysteines are involved either in interchain disulfide bonds or in an intrachain bond. Found in plasma.

Its subcellular location is the secreted. Its function is as follows. Displays several functions associated with host defense: it promotes agglutination, bacterial capsular swelling, phagocytosis and complement fixation through its calcium-dependent binding to phosphorylcholine. Can interact with DNA and histones and may scavenge nuclear material released from damaged circulating cells. The sequence is that of C-reactive protein (Crp) from Rattus norvegicus (Rat).